A 148-amino-acid polypeptide reads, in one-letter code: Large ribosomal subunit protein bL9 (148 aa).

The protein belongs to the bacterial ribosomal protein bL9 family.

Binds to the 23S rRNA. The sequence is that of Large ribosomal subunit protein bL9 from Aliarcobacter butzleri (strain RM4018) (Arcobacter butzleri).